Here is a 472-residue protein sequence, read N- to C-terminus: Probable glycine dehydrogenase (decarboxylating) subunit 2 (472 aa).

Lysine 268 is subject to N6-(pyridoxal phosphate)lysine.

Belongs to the GcvP family. C-terminal subunit subfamily. The glycine cleavage system is composed of four proteins: P, T, L and H. In this organism, the P 'protein' is a heterodimer of two subunits. Requires pyridoxal 5'-phosphate as cofactor.

The catalysed reaction is N(6)-[(R)-lipoyl]-L-lysyl-[glycine-cleavage complex H protein] + glycine + H(+) = N(6)-[(R)-S(8)-aminomethyldihydrolipoyl]-L-lysyl-[glycine-cleavage complex H protein] + CO2. In terms of biological role, the glycine cleavage system catalyzes the degradation of glycine. The P protein binds the alpha-amino group of glycine through its pyridoxal phosphate cofactor; CO(2) is released and the remaining methylamine moiety is then transferred to the lipoamide cofactor of the H protein. The sequence is that of Probable glycine dehydrogenase (decarboxylating) subunit 2 from Thermoplasma acidophilum (strain ATCC 25905 / DSM 1728 / JCM 9062 / NBRC 15155 / AMRC-C165).